Consider the following 121-residue polypeptide: Flagellar protein FliT (121 aa).

The required for homodimerization stretch occupies residues 1–50; the sequence is MNNAPHLYFAWQQLVEKSQLMLRLATEEQWDELIASEMAYVNAVQEIAHL. The fliD binding stretch occupies residues 60–98; sequence MQEQLRPMLLLILDNESKVKQLLQIRMDELAKLVGQSSV.

This sequence belongs to the FliT family. In terms of assembly, homodimer. Interacts with FliD and FlhC.

The protein localises to the cytoplasm. Its subcellular location is the cytosol. Functionally, dual-function protein that regulates the transcription of class 2 flagellar operons and that also acts as an export chaperone for the filament-capping protein FliD. As a transcriptional regulator, acts as an anti-FlhDC factor; it directly binds FlhC, thus inhibiting the binding of the FlhC/FlhD complex to class 2 promoters, resulting in decreased expression of class 2 flagellar operons. As a chaperone, effects FliD transition to the membrane by preventing its premature polymerization, and by directing it to the export apparatus. In Escherichia coli O6:K15:H31 (strain 536 / UPEC), this protein is Flagellar protein FliT.